A 293-amino-acid polypeptide reads, in one-letter code: sn-glycerol-3-phosphate transport system permease protein UgpA (293 aa).

6 helical membrane passes run I10–P30, V72–A92, M108–F128, M156–V176, I204–A224, and L261–F281. The region spanning Y66–Q282 is the ABC transmembrane type-1 domain.

This sequence belongs to the binding-protein-dependent transport system permease family. In terms of assembly, the complex is composed of two ATP-binding proteins (UgpC), two transmembrane proteins (UgpA and UgpE) and a solute-binding protein (UgpB).

It localises to the cell inner membrane. Functionally, part of the ABC transporter complex UgpBAEC involved in sn-glycerol-3-phosphate (G3P) import. Probably responsible for the translocation of the substrate across the membrane. The protein is sn-glycerol-3-phosphate transport system permease protein UgpA (ugpA) of Agrobacterium fabrum (strain C58 / ATCC 33970) (Agrobacterium tumefaciens (strain C58)).